Consider the following 216-residue polypeptide: Nucleolar protein 12 (216 aa).

Positions 33–97 (GFHKRKVERK…LVTAKTESVQ (65 aa)) form a coiled coil. The disordered stretch occupies residues 120 to 216 (LLGLPLPEQG…MTGKARHNGE (97 aa)). The span at 129 to 140 (GDQDGSQEEEVS) shows a compositional bias: acidic residues. 2 stretches are compositionally biased toward basic residues: residues 171–183 (AHSR…KHPR) and 200–216 (KTQR…HNGE).

Belongs to the RRP17 family. As to quaternary structure, interacts with KIAA1191.

It localises to the nucleus. The protein localises to the nucleolus. The protein resides in the cytoplasm. Its function is as follows. Multifunctional RNA binding protein that plays a role in RNA metabolism and DNA maintenance. Participates in the resolution of DNA stress and the maintenance of genome integrity by localizing to sites of DNA insults. Also plays a role in proper nucleolar organization by limiting nucleolar size and regulating nucleolar number. Mechanistically, regulates the nucleolar levels of fibrillarin and nucleolin, two key players in pre-rRNA processing and ribosome assembly. This is Nucleolar protein 12 (Nol12) from Rattus norvegicus (Rat).